A 292-amino-acid polypeptide reads, in one-letter code: Elongation factor Ts (292 aa).

Residues 80-83 are involved in Mg(2+) ion dislocation from EF-Tu; that stretch reads TDFV.

This sequence belongs to the EF-Ts family.

Its subcellular location is the cytoplasm. Its function is as follows. Associates with the EF-Tu.GDP complex and induces the exchange of GDP to GTP. It remains bound to the aminoacyl-tRNA.EF-Tu.GTP complex up to the GTP hydrolysis stage on the ribosome. The protein is Elongation factor Ts of Mycoplasmopsis synoviae (strain 53) (Mycoplasma synoviae).